A 640-amino-acid chain; its full sequence is Threonine--tRNA ligase (640 aa).

The TGS domain maps to 1-61 (MPIITLPDGN…EKDSEVNIIT (61 aa)). The interval 242 to 533 (DHRRIAKQMS…LIEHYAGRMP (292 aa)) is catalytic. Residues C333, H384, and H510 each coordinate Zn(2+).

Belongs to the class-II aminoacyl-tRNA synthetase family. Homodimer. It depends on Zn(2+) as a cofactor.

It is found in the cytoplasm. The catalysed reaction is tRNA(Thr) + L-threonine + ATP = L-threonyl-tRNA(Thr) + AMP + diphosphate + H(+). Its function is as follows. Catalyzes the attachment of threonine to tRNA(Thr) in a two-step reaction: L-threonine is first activated by ATP to form Thr-AMP and then transferred to the acceptor end of tRNA(Thr). Also edits incorrectly charged L-seryl-tRNA(Thr). The chain is Threonine--tRNA ligase from Prochlorococcus marinus (strain MIT 9303).